Consider the following 328-residue polypeptide: Glyoxylate reductase/hydroxypyruvate reductase (328 aa).

Ser36 is modified (phosphoserine). Position 83–84 (83–84 (VG)) interacts with substrate. Residues 162-164 (GRI), 185-188 (RQPR), Ser217, and Ile243 each bind NADP(+). Substrate is bound by residues Arg245, Asp269, and 293 to 296 (HIGS). The active-site Proton donor is His293. Gly295 lines the NADP(+) pocket. At Thr298 the chain carries Phosphothreonine.

Belongs to the D-isomer specific 2-hydroxyacid dehydrogenase family. In terms of assembly, homodimer.

The enzyme catalyses glycolate + NADP(+) = glyoxylate + NADPH + H(+). The catalysed reaction is (R)-glycerate + NAD(+) = 3-hydroxypyruvate + NADH + H(+). It catalyses the reaction (R)-glycerate + NADP(+) = 3-hydroxypyruvate + NADPH + H(+). Its function is as follows. Enzyme with hydroxy-pyruvate reductase, glyoxylate reductase and D-glycerate dehydrogenase enzymatic activities. Reduces hydroxypyruvate to D-glycerate, glyoxylate to glycolate oxidizes D-glycerate to hydroxypyruvate. This is Glyoxylate reductase/hydroxypyruvate reductase (Grhpr) from Mus musculus (Mouse).